An 884-amino-acid chain; its full sequence is Chitin synthase E (884 aa).

2 disordered regions span residues 1–58 and 73–108; these read MGTP…PAVS and AVFAAPPYQESEAASENTFRARSNGDKASREGSRAG. Polar residues-rich tracts occupy residues 37-48 and 84-93; these read QSLLERNNSSHY and EAASENTFRA. An N-linked (GlcNAc...) asparagine glycan is attached at Asn-44. A compositionally biased stretch (basic and acidic residues) spans 95–105; it reads SNGDKASREGS. An N-linked (GlcNAc...) asparagine glycan is attached at Asn-301. The next 7 helical transmembrane spans lie at 513-532, 556-576, 597-617, 635-655, 681-701, 708-728, and 812-832; these read WLNGSFAAGLYAIMHFGRIY, IMTWFSLASYWLTSSVIMDLV, IVNNFVKYGYVWVLTLQFIMA, YFSLVQLYVLILSFYLVVGAF, GGIVLIALVSTYGIYIIASVL, IITSSWAYFLGMTTSINILMV, and VLVCLWVFSNLLVTLLITATG. A glycan (N-linked (GlcNAc...) asparagine) is linked at Asn-840. Residues 852 to 872 form a helical membrane-spanning segment; that stretch reads VILWITAGLSLFRFIGSLWFL.

The protein belongs to the chitin synthase family. Class III subfamily.

The protein resides in the cell membrane. It carries out the reaction [(1-&gt;4)-N-acetyl-beta-D-glucosaminyl](n) + UDP-N-acetyl-alpha-D-glucosamine = [(1-&gt;4)-N-acetyl-beta-D-glucosaminyl](n+1) + UDP + H(+). Polymerizes chitin, a structural polymer of the cell wall and septum, by transferring the sugar moiety of UDP-GlcNAc to the non-reducing end of the growing chitin polymer. Plays an important role in septal growth or maintenance. Mediates colony spore formation. ChsE and chsD seem to play a functionally redundant role in lateral cell wall chitin synthesis. Involved in resistance to echinocandins. This is Chitin synthase E from Aspergillus niger (strain ATCC MYA-4892 / CBS 513.88 / FGSC A1513).